The sequence spans 198 residues: Probable GTP-binding protein EngB (198 aa).

Residues Asn21–Val195 form the EngB-type G domain. GTP is bound by residues Gly29–Ser36, Gly56–Leu60, Asp75–Gly78, Thr142–Asp145, and Val174–Asn176. Mg(2+) is bound by residues Ser36 and Thr58.

Belongs to the TRAFAC class TrmE-Era-EngA-EngB-Septin-like GTPase superfamily. EngB GTPase family. Requires Mg(2+) as cofactor.

Necessary for normal cell division and for the maintenance of normal septation. In Mesoplasma florum (strain ATCC 33453 / NBRC 100688 / NCTC 11704 / L1) (Acholeplasma florum), this protein is Probable GTP-binding protein EngB.